The sequence spans 381 residues: Sulfate adenylyltransferase (381 aa).

The protein belongs to the sulfate adenylyltransferase family.

The catalysed reaction is sulfate + ATP + H(+) = adenosine 5'-phosphosulfate + diphosphate. It functions in the pathway sulfur metabolism; hydrogen sulfide biosynthesis; sulfite from sulfate: step 1/3. This Carboxydothermus hydrogenoformans (strain ATCC BAA-161 / DSM 6008 / Z-2901) protein is Sulfate adenylyltransferase.